Consider the following 156-residue polypeptide: Small ribosomal subunit protein uS7 (156 aa).

It belongs to the universal ribosomal protein uS7 family. In terms of assembly, part of the 30S ribosomal subunit. Contacts proteins S9 and S11.

One of the primary rRNA binding proteins, it binds directly to 16S rRNA where it nucleates assembly of the head domain of the 30S subunit. Is located at the subunit interface close to the decoding center, probably blocks exit of the E-site tRNA. This chain is Small ribosomal subunit protein uS7, found in Leuconostoc citreum (strain KM20).